Here is a 70-residue protein sequence, read N- to C-terminus: Protein SlyX homolog (70 aa).

Belongs to the SlyX family.

This chain is Protein SlyX homolog, found in Shewanella sp. (strain MR-7).